The primary structure comprises 156 residues: uncharacterized protein (156 aa).

3 helical membrane passes run 21–41 (GVLF…AISL), 54–74 (TICS…IDFA), and 80–100 (SVLV…WALF).

The protein localises to the membrane. This is an uncharacterized protein from Saccharomyces cerevisiae (strain ATCC 204508 / S288c) (Baker's yeast).